The chain runs to 705 residues: Voltage-dependent calcium channel beta subunit-associated regulatory protein (705 aa).

Topologically, residues 1-45 (MQPTATMATAATTTTTTTATVALTTSWDNATGRPTAEPDPILDNY) are extracellular. N-linked (GlcNAc...) asparagine glycosylation is present at Asn-29. Residues 46–66 (VLLVVVMSLFVGGTLVVLSGV) form a helical; Signal-anchor for type III membrane protein membrane-spanning segment. Residues 67–705 (LLLCKRCWDV…APTSPDHSPA (639 aa)) lie on the Cytoplasmic side of the membrane. Disordered regions lie at residues 91-113 (TTTY…EDPE) and 212-284 (GKAL…GSGA). Polar residues predominate over residues 245 to 254 (PSASSDSGEG). Residues 267 to 284 (GGPGAAAGPGEAGPGSGA) show a composition bias toward gly residues. Phosphoserine is present on residues Ser-299 and Ser-304. Disordered stretches follow at residues 316-353 (PSQR…DAPQ), 369-436 (FPHP…SYRD), 448-540 (AAAS…RRDY), and 559-655 (HFDD…CPGS). Residues 344–353 (TEQEEGDAPQ) are compositionally biased toward acidic residues. Over residues 371 to 382 (HPRPFLASPPPA) the composition is skewed to pro residues. Residues 383–397 (LGRLEAAEAAGGASP) show a composition bias toward low complexity. Residues 479–488 (AFPPPSPPAP) are compositionally biased toward pro residues. The segment covering 489–499 (RPKDGEARRLL) has biased composition (basic and acidic residues). Ser-507 and Ser-528 each carry phosphoserine. Residues 567 to 585 (ARHRARAHPHARKQWQRGR) are compositionally biased toward basic residues. The segment covering 591 to 614 (GARAAPALAGTPAPPAGAARPARA) has biased composition (low complexity). Phosphoserine is present on Ser-621. A Phosphothreonine modification is found at Thr-698. Ser-699 and Ser-703 each carry phosphoserine.

Interacts with voltage-dependent calcium channels CACNB1, CACNB2, CACNB3 and CACNB4 beta subunits; prevents their interaction with the CACNA1C alpha subunit thereby negatively regulating the activity of the corresponding calcium channels.

Its subcellular location is the cytoplasmic vesicle. It is found in the secretory vesicle. The protein localises to the synaptic vesicle membrane. The protein resides in the cell membrane. It localises to the cell projection. Its subcellular location is the growth cone. In terms of biological role, negatively regulates voltage-gated calcium channels by preventing the interaction between their alpha and beta subunits. Thereby, negatively regulates calcium channels activity at the plasma membrane and indirectly inhibits calcium-regulated exocytosis. The protein is Voltage-dependent calcium channel beta subunit-associated regulatory protein of Homo sapiens (Human).